A 336-amino-acid polypeptide reads, in one-letter code: F420-dependent glucose-6-phosphate dehydrogenase (336 aa).

Residue Asp39 participates in coenzyme F420-(gamma-Glu)n binding. Residue His40 is the Proton donor of the active site. Coenzyme F420-(gamma-Glu)n is bound by residues Thr76 and 107-108 (TG). Catalysis depends on Glu109, which acts as the Proton acceptor. Coenzyme F420-(gamma-Glu)n contacts are provided by residues Asn112, 177–178 (GG), and 180–181 (AV). The substrate site is built by Thr195, Lys198, Lys259, and Arg283.

Belongs to the F420-dependent glucose-6-phosphate dehydrogenase family. In terms of assembly, homodimer.

It carries out the reaction oxidized coenzyme F420-(gamma-L-Glu)(n) + D-glucose 6-phosphate + H(+) = 6-phospho-D-glucono-1,5-lactone + reduced coenzyme F420-(gamma-L-Glu)(n). Its function is as follows. Catalyzes the coenzyme F420-dependent oxidation of glucose 6-phosphate (G6P) to 6-phosphogluconolactone. Appears to have a role in resistance to oxidative stress, via its consumption of G6P that serves as a source of reducing power to combat oxidative stress in mycobacteria. More precisely, is likely involved in a F420-dependent anti-oxidant mechanism that protects M.tuberculosis against oxidative stress and bactericidal agents. In terms of biological role, is essential for the bioreductive activation of the bicyclic 4-nitroimidazole prodrug PA-824 (nitroimidazo-oxazine) developed for anti-tuberculosis therapy against both replicating and persistent bacteria. It does not interact directly with PA-824 but, rather, provides reduced F420 to the deazaflavin-dependent nitroreductase Ddn, which in turn activates PA-824. This Mycobacterium tuberculosis (strain CDC 1551 / Oshkosh) protein is F420-dependent glucose-6-phosphate dehydrogenase (fgd1).